The primary structure comprises 140 residues: Translation initiation factor 2 subunit beta (140 aa).

This sequence belongs to the eIF-2-beta/eIF-5 family. In terms of assembly, heterotrimer composed of an alpha, a beta and a gamma chain.

In terms of biological role, eIF-2 functions in the early steps of protein synthesis by forming a ternary complex with GTP and initiator tRNA. This chain is Translation initiation factor 2 subunit beta (eif2b), found in Pyrococcus abyssi (strain GE5 / Orsay).